The sequence spans 860 residues: Probable leucine--tRNA ligase, cytoplasmic (860 aa).

Positions 41–51 (PYMNGKLHLGH) match the 'HIGH' region motif. The 'KMSKS' region motif lies at 552-556 (KMSKS). Residue lysine 555 coordinates ATP.

The protein belongs to the class-I aminoacyl-tRNA synthetase family.

Its subcellular location is the cytoplasm. It carries out the reaction tRNA(Leu) + L-leucine + ATP = L-leucyl-tRNA(Leu) + AMP + diphosphate. The protein is Probable leucine--tRNA ligase, cytoplasmic of Enterocytozoon bieneusi (strain H348) (Microsporidian parasite).